The chain runs to 1288 residues: VWFA and cache domain-containing protein 1 (1288 aa).

The signal sequence occupies residues 1-49 (MAREPEEEETVRPAAVVRRCPRCPGWPGAPRPPLWLLCLVACWILGAVA). Residues 50–1109 (DADFSILDEA…ITLNMIKSAP (1060 aa)) lie on the Extracellular side of the membrane. Asn-159 is a glycosylation site (N-linked (GlcNAc...) asparagine). The VWFA domain maps to 242 to 457 (HIVVILDHGA…TTVGRFYTNL (216 aa)). 2 consecutive Cache domains span residues 467–546 (FSLP…SEPP) and 786–867 (LTGP…HPTL). The helical transmembrane segment at 1110–1130 (VGPVAGGIMGCIMVLVLAVYA) threads the bilayer. Residues 1131-1288 (YRHQIHRRSH…VTVHTVDAEC (158 aa)) are Cytoplasmic-facing. Disordered stretches follow at residues 1157–1176 (NLEN…RGII) and 1187–1237 (ERHV…VDVG). Residues 1159–1174 (ENDRDERDDDSHEDRG) show a composition bias toward basic and acidic residues. Residues 1210-1229 (GYSTMSPQEDSENPPCNNDP) show a composition bias toward polar residues.

The protein belongs to the calcium channel subunit alpha-2/delta family.

It is found in the membrane. Functionally, may regulate voltage-dependent calcium channels. This Mus musculus (Mouse) protein is VWFA and cache domain-containing protein 1 (Cachd1).